Reading from the N-terminus, the 134-residue chain is Ribonuclease VapC1 (134 aa).

The 130-residue stretch at 3–132 (YMLDTNIIIY…RITDLQWQDW (130 aa)) folds into the PINc domain. 2 residues coordinate Mg(2+): Asp-6 and Asp-99.

This sequence belongs to the PINc/VapC protein family. As to quaternary structure, forms a complex with VapB1. The cofactor is Mg(2+).

Its function is as follows. Toxic component of a type II toxin-antitoxin (TA) system. Upon expression in E.coli inhibits growth in liquid culture. Its toxic effect is neutralized by coexpression with antitoxin VapB1. Degrades RNA but not ss- or ds-DNA in vitro, degradation is inhibited by VapB1 antitoxin. The sequence is that of Ribonuclease VapC1 from Haemophilus influenzae (strain R2866).